The following is a 126-amino-acid chain: CD59 glycoprotein (126 aa).

The N-terminal stretch at methionine 1–serine 22 is a signal peptide. One can recognise a UPAR/Ly6 domain in the interval leucine 23 to threonine 110. Disulfide bonds link cysteine 25/cysteine 48, cysteine 28/cysteine 35, cysteine 41/cysteine 61, cysteine 67/cysteine 85, and cysteine 86/cysteine 91. A glycan (N-linked (GlcNAc...) asparagine) is linked at asparagine 38. Asparagine 101 is lipidated: GPI-anchor amidated asparagine. A propeptide spans glycine 102–phenylalanine 126 (removed in mature form).

In terms of assembly, interacts with T-cell surface antigen CD2. Post-translationally, N- and O-glycosylated.

Its subcellular location is the cell membrane. It is found in the secreted. In terms of biological role, potent inhibitor of the complement membrane attack complex (MAC) action, which protects self-cells from damage during complement activation. Acts by binding to the beta-haipins of C8 (C8A and C8B) components of the assembling MAC, forming an intermolecular beta-sheet that prevents incorporation of the multiple copies of C9 required for complete formation of the osmolytic pore. This chain is CD59 glycoprotein, found in Rattus norvegicus (Rat).